Here is a 230-residue protein sequence, read N- to C-terminus: Acyl-protein thioesterase 1 (230 aa).

Active-site charge relay system residues include serine 119, aspartate 174, and histidine 208. The residue at position 224 (lysine 224) is an N6-acetyllysine.

This sequence belongs to the AB hydrolase superfamily. AB hydrolase 2 family. Homodimer. Platelets.

It localises to the cytoplasm. The protein resides in the cell membrane. Its subcellular location is the nucleus membrane. It is found in the endoplasmic reticulum. The catalysed reaction is S-hexadecanoyl-L-cysteinyl-[protein] + H2O = L-cysteinyl-[protein] + hexadecanoate + H(+). The enzyme catalyses 1-hexadecanoyl-sn-glycero-3-phosphocholine + H2O = sn-glycerol 3-phosphocholine + hexadecanoate + H(+). It carries out the reaction a 1-(9Z-octadecenoyl)-2-acyl-sn-glycero-3-phosphocholine + H2O = a 2-acyl-sn-glycero-3-phosphocholine + (9Z)-octadecenoate + H(+). Inhibited by palmostatin-B, leading to impair depalmitoylating of Ras. Functionally, acts as an acyl-protein thioesterase. Hydrolyzes fatty acids from S-acylated cysteine residues in proteins such as trimeric G alpha proteins or HRAS. Acts as a palmitoyl thioesterase that catalyzes depalmitoylation of proteins, such as ADRB2, KCNMA1 and SQSTM1. Acts as a negative regulator of autophagy by mediating palmitoylation of SQSTM1, decreasing affinity between SQSTM1 and ATG8 proteins and recruitment of ubiquitinated cargo proteins to autophagosomes. Acts as a lysophospholipase and hydrolyzes lysophosphatidylcholine (lyso-PC). Also hydrolyzes lysophosphatidylethanolamine (lyso-PE), lysophosphatidylinositol (lyso-PI) and lysophosphatidylserine (lyso-PS). Has much higher thioesterase activity than lysophospholipase activity. Contributes to the production of lysophosphatidic acid (LPA) during blood coagulation by recognizing and cleaving plasma phospholipids to generate lysophospholipids which in turn act as substrates for ENPP2 to produce LPA. This Homo sapiens (Human) protein is Acyl-protein thioesterase 1 (LYPLA1).